The primary structure comprises 330 residues: MYRNCRKAFTFSLRHYSTAPTEKPSLKLVAELRKRTEVSITKAREALSASNNDVSAALEWLQKDLITSGAKKAAKLGGRPTPEGLISVSVLSRGGESHVAGVRAAMIELNCETDFVGRNELFGRLAADIAHTAAYISDRTGSATAFNRAFPLDVLKDAPLLSQLNPTAPPTGTVGSSIRDMISKVGENVSLRRALAVVENSPSPNGDIALRIGSYVHDYKIGSLALLALKSRGISSSLNSDAFRERLEFLERALARQILGFETTSVNSSEDQTSLYNQPFMMFSREMDSPLVGEVLRNWSEKEGLLKENSDGGVAVLDFAKWKVGETFDE.

A mitochondrion-targeting transit peptide spans Met1–Tyr16.

Belongs to the EF-Ts family.

The protein localises to the mitochondrion. Its function is as follows. Associates with the EF-Tu.GDP complex and induces the exchange of GDP to GTP. It remains bound to the aminoacyl-tRNA.EF-Tu.GTP complex up to the GTP hydrolysis stage on the ribosome. In Laccaria bicolor (strain S238N-H82 / ATCC MYA-4686) (Bicoloured deceiver), this protein is Elongation factor Ts, mitochondrial.